Consider the following 252-residue polypeptide: uncharacterized protein (252 aa).

9 to 33 lines the NADP(+) pocket; that stretch reads LITGGSAGIGLELAKRLLELGNEVI. S139 contributes to the substrate binding site. The Proton acceptor role is filled by Y152.

This sequence belongs to the short-chain dehydrogenases/reductases (SDR) family.

Its subcellular location is the cytoplasm. This is an uncharacterized protein from Bacillus subtilis (strain 168).